A 539-amino-acid chain; its full sequence is CTP synthase (539 aa).

The interval methionine 1–leucine 267 is amidoligase domain. Serine 15 serves as a coordination point for CTP. Serine 15 contributes to the UTP binding site. ATP is bound by residues serine 16–leucine 21 and aspartate 73. Aspartate 73 and glutamate 141 together coordinate Mg(2+). CTP-binding positions include aspartate 148–glutamate 150, lysine 188–glutamine 193, and lysine 224. UTP-binding positions include lysine 188–glutamine 193 and lysine 224. The 245-residue stretch at threonine 292–lysine 536 folds into the Glutamine amidotransferase type-1 domain. An L-glutamine-binding site is contributed by glycine 359. Cysteine 386 functions as the Nucleophile; for glutamine hydrolysis in the catalytic mechanism. Residues leucine 387 to glutamine 390, glutamate 410, and arginine 464 contribute to the L-glutamine site. Catalysis depends on residues histidine 509 and glutamate 511.

The protein belongs to the CTP synthase family. Homotetramer.

It carries out the reaction UTP + L-glutamine + ATP + H2O = CTP + L-glutamate + ADP + phosphate + 2 H(+). The enzyme catalyses L-glutamine + H2O = L-glutamate + NH4(+). It catalyses the reaction UTP + NH4(+) + ATP = CTP + ADP + phosphate + 2 H(+). It participates in pyrimidine metabolism; CTP biosynthesis via de novo pathway; CTP from UDP: step 2/2. Allosterically activated by GTP, when glutamine is the substrate; GTP has no effect on the reaction when ammonia is the substrate. The allosteric effector GTP functions by stabilizing the protein conformation that binds the tetrahedral intermediate(s) formed during glutamine hydrolysis. Inhibited by the product CTP, via allosteric rather than competitive inhibition. Catalyzes the ATP-dependent amination of UTP to CTP with either L-glutamine or ammonia as the source of nitrogen. Regulates intracellular CTP levels through interactions with the four ribonucleotide triphosphates. The polypeptide is CTP synthase (Wolbachia sp. subsp. Brugia malayi (strain TRS)).